The chain runs to 249 residues: Geranylgeranylglyceryl phosphate synthase (249 aa).

Residues Asp-20 and Ser-49 each coordinate Mg(2+). Residues 169-175, 200-201, and 222-223 contribute to the sn-glycerol 1-phosphate site; these read YLDAGSG, GG, and GN.

It belongs to the GGGP/HepGP synthase family. Group II subfamily. In terms of assembly, homohexamer. Mg(2+) serves as cofactor.

It catalyses the reaction sn-glycerol 1-phosphate + (2E,6E,10E)-geranylgeranyl diphosphate = sn-3-O-(geranylgeranyl)glycerol 1-phosphate + diphosphate. Prenyltransferase that catalyzes the transfer of the geranylgeranyl moiety of geranylgeranyl diphosphate (GGPP) to the C3 hydroxyl of sn-glycerol-1-phosphate (G1P). The chain is Geranylgeranylglyceryl phosphate synthase from Spirosoma linguale (strain ATCC 33905 / DSM 74 / LMG 10896 / Claus 1).